Here is a 622-residue protein sequence, read N- to C-terminus: Meiotic expression up-regulated protein 25 (622 aa).

The sequence is that of Meiotic expression up-regulated protein 25 (meu25) from Schizosaccharomyces pombe (strain 972 / ATCC 24843) (Fission yeast).